A 350-amino-acid polypeptide reads, in one-letter code: N(4)-bis(aminopropyl)spermidine synthase (350 aa).

This sequence belongs to the branched-chain polyamine synthase family.

The protein resides in the cytoplasm. It catalyses the reaction 2 S-adenosyl 3-(methylsulfanyl)propylamine + spermidine = N(4)-bis(aminopropyl)spermidine + 2 S-methyl-5'-thioadenosine + 2 H(+). Its pathway is amine and polyamine biosynthesis. In terms of biological role, involved in the biosynthesis of branched-chain polyamines, which support the growth of thermophiles under high-temperature conditions. Catalyzes the sequential condensation of spermidine with the aminopropyl groups of decarboxylated S-adenosylmethionines to produce N(4)-bis(aminopropyl)spermidine via N(4)-aminopropylspermidine. The sequence is that of N(4)-bis(aminopropyl)spermidine synthase from Methanocaldococcus jannaschii (strain ATCC 43067 / DSM 2661 / JAL-1 / JCM 10045 / NBRC 100440) (Methanococcus jannaschii).